A 673-amino-acid chain; its full sequence is Annexin A6 (673 aa).

The residue at position 2 (Ala-2) is an N-acetylalanine. At Ser-13 the chain carries Phosphoserine. 8 Annexin repeats span residues Phe-20 to Arg-91, Pro-92 to Gln-163, Asp-175 to Lys-247, Ser-251 to Gly-322, Phe-363 to Met-434, Pro-435 to Thr-506, Glu-521 to Gln-595, and Asn-599 to Gly-670. At Tyr-30 the chain carries Phosphotyrosine. Lys-63, Lys-68, Lys-75, and Lys-81 each carry N6-acetyllysine. Tyr-201 is modified (phosphotyrosine). An N6-acetyllysine mark is found at Lys-306, Lys-370, and Lys-418. Ser-422 is subject to Phosphoserine. Lys-483 is modified (N6-acetyllysine). At Ser-537 the chain carries Phosphoserine. Lys-620 carries the N6-acetyllysine modification.

The protein belongs to the annexin family.

It is found in the cytoplasm. The protein resides in the melanosome. Functionally, may associate with CD21. May regulate the release of Ca(2+) from intracellular stores. In Mus musculus (Mouse), this protein is Annexin A6 (Anxa6).